A 540-amino-acid chain; its full sequence is Cytochrome P450 monooxygenase prx8 (540 aa).

A helical transmembrane segment spans residues 50-68 (ALGAAIALFACACAYALVA). An N-linked (GlcNAc...) asparagine glycan is attached at Asn460. Cys483 is a heme binding site.

It belongs to the cytochrome P450 family. It depends on heme as a cofactor.

The protein resides in the membrane. The protein operates within sesquiterpene biosynthesis. Its function is as follows. Cytochrome P450 monooxygenase; part of the gene cluster that mediates the biosynthesis of PR-toxin, a bicyclic sesquiterpene belonging to the eremophilane class and acting as a mycotoxin. The first step of the pathway is catalyzed by the aristolochene synthase which performs the cyclization of trans,trans-farnesyl diphosphate (FPP) to the bicyclic sesquiterpene aristolochene. Following the formation of aristolochene, the non-oxygenated aristolochene is converted to the trioxygenated intermediate eremofortin B, via 7-epi-neopetasone. This conversion appears to involve three enzymes, a hydroxysterol oxidase-like enzyme, the quinone-oxidase prx3 that forms the quinone-type-structure in the bicyclic nucleus of aristolochene with the C8-oxo group and the C-3 hydroxyl group, and the P450 monooxygenase prx9 that introduces the epoxide at the double bond between carbons 1 and 2. No monoxy or dioxy-intermediates have been reported to be released to the broth, so these three early oxidative reactions may be coupled together. Eremofortin B is further oxidized by another P450 monooxygenase, that introduces a second epoxide between carbons 7 and 11 prior to acetylation to eremofortin A by the acetyltransferase prx11. The second epoxidation may be performed by a second P450 monooxygenase. After the acetylation step, eremofortin A is converted to eremofortin C and then to PR-toxin. First the conversion of eremofortin A to eremofortin C proceeds by oxidation of the side chain of the molecule at C-12 and is catalyzed by the short-chain oxidoreductase prx1. The cytochrome P450 monooxygenase prx8 also plays a role in this step. The primary alcohol formed at C-12 is finally oxidized by the short-chain alcohol dehydrogenase prx4 that forms PR-toxin. The sequence is that of Cytochrome P450 monooxygenase prx8 from Penicillium rubens (strain ATCC 28089 / DSM 1075 / NRRL 1951 / Wisconsin 54-1255) (Penicillium chrysogenum).